Here is a 341-residue protein sequence, read N- to C-terminus: S-adenosylmethionine:tRNA ribosyltransferase-isomerase (341 aa).

It belongs to the QueA family. As to quaternary structure, monomer.

The protein localises to the cytoplasm. The catalysed reaction is 7-aminomethyl-7-carbaguanosine(34) in tRNA + S-adenosyl-L-methionine = epoxyqueuosine(34) in tRNA + adenine + L-methionine + 2 H(+). It participates in tRNA modification; tRNA-queuosine biosynthesis. Functionally, transfers and isomerizes the ribose moiety from AdoMet to the 7-aminomethyl group of 7-deazaguanine (preQ1-tRNA) to give epoxyqueuosine (oQ-tRNA). This is S-adenosylmethionine:tRNA ribosyltransferase-isomerase from Caldanaerobacter subterraneus subsp. tengcongensis (strain DSM 15242 / JCM 11007 / NBRC 100824 / MB4) (Thermoanaerobacter tengcongensis).